Reading from the N-terminus, the 228-residue chain is Glyceraldehyde 3-phosphate phosphatase (228 aa).

The protein belongs to the HAD-like hydrolase superfamily. Mg(2+) serves as cofactor.

Catalyzes the dephosphorylation of D,L-glyceraldehyde 3-phosphate in vitro. This chain is Glyceraldehyde 3-phosphate phosphatase, found in Methanocaldococcus jannaschii (strain ATCC 43067 / DSM 2661 / JAL-1 / JCM 10045 / NBRC 100440) (Methanococcus jannaschii).